We begin with the raw amino-acid sequence, 548 residues long: Chaperonin GroEL 3 (548 aa).

ATP is bound by residues 30-33, lysine 51, 87-91, glycine 415, and aspartate 496; these read TLGP and DGTTT.

It belongs to the chaperonin (HSP60) family. As to quaternary structure, forms a cylinder of 14 subunits composed of two heptameric rings stacked back-to-back. Interacts with the co-chaperonin GroES.

It is found in the cytoplasm. It catalyses the reaction ATP + H2O + a folded polypeptide = ADP + phosphate + an unfolded polypeptide.. Functionally, together with its co-chaperonin GroES, plays an essential role in assisting protein folding. The GroEL-GroES system forms a nano-cage that allows encapsulation of the non-native substrate proteins and provides a physical environment optimized to promote and accelerate protein folding. This Nitrobacter winogradskyi (strain ATCC 25391 / DSM 10237 / CIP 104748 / NCIMB 11846 / Nb-255) protein is Chaperonin GroEL 3.